The primary structure comprises 264 residues: Acyl-[acyl-carrier-protein]--UDP-N-acetylglucosamine O-acyltransferase (264 aa).

This sequence belongs to the transferase hexapeptide repeat family. LpxA subfamily. As to quaternary structure, homotrimer.

The protein resides in the cytoplasm. It catalyses the reaction a (3R)-hydroxyacyl-[ACP] + UDP-N-acetyl-alpha-D-glucosamine = a UDP-3-O-[(3R)-3-hydroxyacyl]-N-acetyl-alpha-D-glucosamine + holo-[ACP]. It functions in the pathway glycolipid biosynthesis; lipid IV(A) biosynthesis; lipid IV(A) from (3R)-3-hydroxytetradecanoyl-[acyl-carrier-protein] and UDP-N-acetyl-alpha-D-glucosamine: step 1/6. Its function is as follows. Involved in the biosynthesis of lipid A, a phosphorylated glycolipid that anchors the lipopolysaccharide to the outer membrane of the cell. The polypeptide is Acyl-[acyl-carrier-protein]--UDP-N-acetylglucosamine O-acyltransferase (Rickettsia prowazekii (strain Madrid E)).